A 1055-amino-acid chain; its full sequence is Auxin response factor 16 (1055 aa).

The TF-B3 DNA-binding region spans 127–229 (FCKTLTASDT…QLLLGIRRAT (103 aa)). 5 disordered regions span residues 485–510 (PVMS…QQSS), 532–565 (QEHL…EQTS), 585–609 (SQLQ…PIAG), 701–720 (SDSI…LNHM), and 732–769 (SHSA…SRNL). Composition is skewed to low complexity over residues 488–510 (SQHQ…QQSS) and 532–552 (QEHL…ASSL). A compositionally biased stretch (low complexity) spans 742-756 (PSSSTAPSTSRISPI). The span at 757 to 769 (NSLSRANQGSRNL) shows a compositional bias: polar residues. Residues 940 to 1024 (RTFTKVQKRG…KSIKILSAAE (85 aa)) enclose the PB1 domain. Residues 1034–1055 (LGGVPPQTQACSASDDANAWRG) form a disordered region.

It belongs to the ARF family. Homodimers and heterodimers. Expressed in roots, culms, leaves and young panicles.

It localises to the nucleus. Its function is as follows. Auxin response factors (ARFs) are transcriptional factors that bind specifically to the DNA sequence 5'-TGTCTC-3' found in the auxin-responsive promoter elements (AuxREs). In Oryza sativa subsp. japonica (Rice), this protein is Auxin response factor 16 (ARF16).